The primary structure comprises 303 residues: Pseudouridine-5'-phosphate glycosidase (303 aa).

Glu25 (proton donor) is an active-site residue. Lys87 and Val107 together coordinate substrate. Asp139 lines the Mn(2+) pocket. Residue 141–143 (SAD) participates in substrate binding. Lys160 acts as the Nucleophile in catalysis.

This sequence belongs to the pseudouridine-5'-phosphate glycosidase family. In terms of assembly, homotrimer. Mn(2+) serves as cofactor.

It carries out the reaction D-ribose 5-phosphate + uracil = psi-UMP + H2O. Functionally, catalyzes the reversible cleavage of pseudouridine 5'-phosphate (PsiMP) to ribose 5-phosphate and uracil. Functions biologically in the cleavage direction, as part of a pseudouridine degradation pathway. This Hahella chejuensis (strain KCTC 2396) protein is Pseudouridine-5'-phosphate glycosidase.